The primary structure comprises 87 residues: Small ribosomal subunit protein uS15c (87 aa).

It belongs to the universal ribosomal protein uS15 family. In terms of assembly, part of the 30S ribosomal subunit.

It localises to the plastid. Its subcellular location is the chloroplast. The protein is Small ribosomal subunit protein uS15c (rps15) of Oenothera argillicola (Appalachian evening primrose).